A 231-amino-acid polypeptide reads, in one-letter code: NDR1/HIN1-like protein 3 (231 aa).

Residues 47–67 (VIFNILITIAVLLGIAALIIW) form a helical membrane-spanning segment. Residues Asn102, Asn135, Asn145, and Asn215 are each glycosylated (N-linked (GlcNAc...) asparagine).

In terms of assembly, may form oligomers or be a component of larger protein complex in plasma membranes. Glycosylated. As to expression, expressed in roots, young and senescing leaves, cauline leaves, stems and siliques.

The protein localises to the cell membrane. Its function is as follows. Confers resistance to Pseudomonas syringae pv. tomato DC3000 (Pst DC3000). The chain is NDR1/HIN1-like protein 3 from Arabidopsis thaliana (Mouse-ear cress).